Consider the following 345-residue polypeptide: S-adenosylmethionine:tRNA ribosyltransferase-isomerase (345 aa).

This sequence belongs to the QueA family. As to quaternary structure, monomer.

It localises to the cytoplasm. The catalysed reaction is 7-aminomethyl-7-carbaguanosine(34) in tRNA + S-adenosyl-L-methionine = epoxyqueuosine(34) in tRNA + adenine + L-methionine + 2 H(+). It participates in tRNA modification; tRNA-queuosine biosynthesis. Transfers and isomerizes the ribose moiety from AdoMet to the 7-aminomethyl group of 7-deazaguanine (preQ1-tRNA) to give epoxyqueuosine (oQ-tRNA). This is S-adenosylmethionine:tRNA ribosyltransferase-isomerase from Helicobacter pylori (strain HPAG1).